Reading from the N-terminus, the 611-residue chain is Leucine aminopeptidase (611 aa).

Substrate contacts are provided by residues 129–131 (QCQ) and 278–282 (GGMEN). His-305 serves as a coordination point for Zn(2+). The Proton acceptor role is filled by Glu-306. Residues His-309 and Glu-328 each coordinate Zn(2+). The active-site Proton donor is the Tyr-393. A substrate-binding site is contributed by 562–564 (RMK).

The protein belongs to the peptidase M1 family. Requires Zn(2+) as cofactor.

It localises to the cytoplasm. The catalysed reaction is an epoxide + H2O = an ethanediol. In terms of biological role, aminopeptidase that preferentially cleaves di- and tripeptides. Also has low epoxide hydrolase activity (in vitro). Can hydrolyze the epoxide leukotriene LTA(4) but it forms preferentially 5,6-dihydroxy-7,9,11,14-eicosatetraenoic acid rather than the cytokine leukotriene B(4) as the product compared to the homologous mammalian enzyme (in vitro). This chain is Leucine aminopeptidase (LKHA4), found in Oryza sativa subsp. japonica (Rice).